Here is a 154-residue protein sequence, read N- to C-terminus: Cyanate hydratase (154 aa).

Residues Arg100, Glu103, and Ser126 contribute to the active site.

This sequence belongs to the cyanase family.

The catalysed reaction is cyanate + hydrogencarbonate + 3 H(+) = NH4(+) + 2 CO2. Catalyzes the reaction of cyanate with bicarbonate to produce ammonia and carbon dioxide. This is Cyanate hydratase from Aspergillus fumigatus (strain CBS 144.89 / FGSC A1163 / CEA10) (Neosartorya fumigata).